Here is a 304-residue protein sequence, read N- to C-terminus: Oxygen-dependent coproporphyrinogen-III oxidase (304 aa).

A substrate-binding site is contributed by Ser94. 2 residues coordinate a divalent metal cation: His98 and His108. His108 serves as the catalytic Proton donor. Asn110–Arg112 lines the substrate pocket. His147 and His177 together coordinate a divalent metal cation. The interval Tyr242–Arg277 is important for dimerization. Residue Gly260–Arg262 coordinates substrate.

Belongs to the aerobic coproporphyrinogen-III oxidase family. As to quaternary structure, homodimer. The cofactor is a divalent metal cation.

It localises to the cytoplasm. The catalysed reaction is coproporphyrinogen III + O2 + 2 H(+) = protoporphyrinogen IX + 2 CO2 + 2 H2O. Its pathway is porphyrin-containing compound metabolism; protoporphyrin-IX biosynthesis; protoporphyrinogen-IX from coproporphyrinogen-III (O2 route): step 1/1. Functionally, involved in the heme biosynthesis. Catalyzes the aerobic oxidative decarboxylation of propionate groups of rings A and B of coproporphyrinogen-III to yield the vinyl groups in protoporphyrinogen-IX. This Methylococcus capsulatus (strain ATCC 33009 / NCIMB 11132 / Bath) protein is Oxygen-dependent coproporphyrinogen-III oxidase.